The primary structure comprises 108 residues: Sperm-egg fusion protein LLCFC1 (108 aa).

The first 30 residues, Met1 to Thr30, serve as a signal peptide directing secretion. The segment covering Gly39–Ser49 has biased composition (basic and acidic residues). The tract at residues Gly39 to Ser64 is disordered.

In terms of tissue distribution, detected in testicular germ cells and spermatozoa (at protein level). Abundantly expressed in testis.

It is found in the secreted. Sperm protein required for fusion of sperm with the egg membrane during fertilization. The sequence is that of Sperm-egg fusion protein LLCFC1 from Mus musculus (Mouse).